The sequence spans 258 residues: Aspartate/glutamate leucyltransferase (258 aa).

Belongs to the R-transferase family. Bpt subfamily.

The protein localises to the cytoplasm. It carries out the reaction N-terminal L-glutamyl-[protein] + L-leucyl-tRNA(Leu) = N-terminal L-leucyl-L-glutamyl-[protein] + tRNA(Leu) + H(+). The enzyme catalyses N-terminal L-aspartyl-[protein] + L-leucyl-tRNA(Leu) = N-terminal L-leucyl-L-aspartyl-[protein] + tRNA(Leu) + H(+). Its function is as follows. Functions in the N-end rule pathway of protein degradation where it conjugates Leu from its aminoacyl-tRNA to the N-termini of proteins containing an N-terminal aspartate or glutamate. In Rhizobium etli (strain ATCC 51251 / DSM 11541 / JCM 21823 / NBRC 15573 / CFN 42), this protein is Aspartate/glutamate leucyltransferase.